The sequence spans 319 residues: 4-diphosphocytidyl-2-C-methyl-D-erythritol kinase (319 aa).

Residue Lys21 is part of the active site. Pro106–Ser116 contributes to the ATP binding site. Asp148 is an active-site residue.

It belongs to the GHMP kinase family. IspE subfamily.

It carries out the reaction 4-CDP-2-C-methyl-D-erythritol + ATP = 4-CDP-2-C-methyl-D-erythritol 2-phosphate + ADP + H(+). Its pathway is isoprenoid biosynthesis; isopentenyl diphosphate biosynthesis via DXP pathway; isopentenyl diphosphate from 1-deoxy-D-xylulose 5-phosphate: step 3/6. Functionally, catalyzes the phosphorylation of the position 2 hydroxy group of 4-diphosphocytidyl-2C-methyl-D-erythritol. This Prochlorococcus marinus (strain MIT 9303) protein is 4-diphosphocytidyl-2-C-methyl-D-erythritol kinase.